We begin with the raw amino-acid sequence, 390 residues long: 4-hydroxycoumarin synthase 1 (390 aa).

The active site involves Cys161.

Belongs to the thiolase-like superfamily. Chalcone/stilbene synthases family. Homodimer.

It carries out the reaction 2-hydroxybenzoyl-CoA + malonyl-CoA = 4-hydroxycoumarin + CO2 + 2 CoA. Type III polyketide synthase involved preferentially in the biosynthesis of 4-hydroxycoumarin from salicoyl-CoA. Can also use benzoyl-CoA and malonyl-CoA to produce 3,5-dihydroxybiphenyl as a major product and benzoyldiacetic acid lactone as a minor side product. Can also use m-hydroxybenzoyl-CoA as substrate, producing m-hydroxybenzoyl diacetic acid lactone as a derailment product. No activity with p-hydroxybenzoyl-CoA, CoA-linked cinnamic acids or acetyl-CoA. The protein is 4-hydroxycoumarin synthase 1 (BIS2) of Sorbus aucuparia (European mountain ash).